Consider the following 431-residue polypeptide: Glutamyl-tRNA(Gln) amidotransferase subunit A (431 aa).

Active-site charge relay system residues include Lys55 and Ser130. Ser154 functions as the Acyl-ester intermediate in the catalytic mechanism.

The protein belongs to the amidase family. GatA subfamily. In terms of assembly, heterotrimer of A, B and C subunits.

The enzyme catalyses L-glutamyl-tRNA(Gln) + L-glutamine + ATP + H2O = L-glutaminyl-tRNA(Gln) + L-glutamate + ADP + phosphate + H(+). Allows the formation of correctly charged Gln-tRNA(Gln) through the transamidation of misacylated Glu-tRNA(Gln) in organisms which lack glutaminyl-tRNA synthetase. The reaction takes place in the presence of glutamine and ATP through an activated gamma-phospho-Glu-tRNA(Gln). This Methanococcus vannielii (strain ATCC 35089 / DSM 1224 / JCM 13029 / OCM 148 / SB) protein is Glutamyl-tRNA(Gln) amidotransferase subunit A.